Reading from the N-terminus, the 390-residue chain is 5-hydroxytryptamine receptor 1B (390 aa).

Residues 1–46 lie on the Extracellular side of the membrane; that stretch reads MEEPGAQCAPPXPAGSETWVPQANLSSAPSQNCSAKDYIYQDSIAL. Residues Asn24 and Asn32 are each glycosylated (N-linked (GlcNAc...) asparagine). Residues 47 to 72 traverse the membrane as a helical segment; the sequence is PWKVLLVMLLALITLATTLSNAFVIA. Over 73–86 the chain is Cytoplasmic; that stretch reads TVYRTRKLHTPANY. The helical transmembrane segment at 87–111 threads the bilayer; the sequence is LIASLAVTDLLVSILVMPISTMYTV. Residues 112–119 lie on the Extracellular side of the membrane; it reads TGRWTLGQ. A helical membrane pass occupies residues 120–145; sequence VVCDFWLSSDITCCTASILHLCVIAL. Cys122 and Cys199 form a disulfide bridge. Positions 129 and 134 each coordinate ergotamine. The short motif at 146-148 is the DRY motif; important for ligand-induced conformation changes and signaling element; sequence DRY. At 146 to 165 the chain is on the cytoplasmic side; that stretch reads DRYWAITDAVEYSAKRTPKR. The helical transmembrane segment at 166-184 threads the bilayer; sequence AAVMIALVWVFSISISLPP. Residues 185 to 205 lie on the Extracellular side of the membrane; the sequence is FFWRQAKAEEEVSECVVNTDH. Val201 provides a ligand contact to ergotamine. Residues 206–229 traverse the membrane as a helical segment; it reads ILYTVYSTVGAFYFPTLLLIALYG. Topologically, residues 230–315 are cytoplasmic; sequence RIYVEARSRI…AARERKATKT (86 aa). Over residues 259 to 272 the composition is skewed to polar residues; that stretch reads DSPGSTSSVTSINS. The interval 259–281 is disordered; it reads DSPGSTSSVTSINSRVPDVPSES. Residues 316–337 traverse the membrane as a helical segment; the sequence is LGIILGAFIVCWLPFFIISLVM. Residues 338–347 are Extracellular-facing; the sequence is PICKDACWFH. A helical membrane pass occupies residues 348-370; it reads LAIFDFFTWLGYLNSLINPIIYT. The NPxxY motif; important for ligand-induced conformation changes and signaling motif lies at 365–369; sequence NPIIY. The Cytoplasmic portion of the chain corresponds to 371-390; sequence MSNEDFKQAFHKLIRFKCTS. Cys388 carries the S-palmitoyl cysteine lipid modification.

Belongs to the G-protein coupled receptor 1 family. Homodimer. Heterodimer with HTR1D. In terms of processing, phosphorylated. Desensitization of the receptor may be mediated by its phosphorylation. Palmitoylated.

The protein localises to the cell membrane. In terms of biological role, G-protein coupled receptor for 5-hydroxytryptamine (serotonin). Also functions as a receptor for ergot alkaloid derivatives, various anxiolytic and antidepressant drugs and other psychoactive substances, such as lysergic acid diethylamide (LSD). Ligand binding causes a conformation change that triggers signaling via guanine nucleotide-binding proteins (G proteins) and modulates the activity of downstream effectors, such as adenylate cyclase. HTR1B is coupled to G(i)/G(o) G alpha proteins and mediates inhibitory neurotransmission by inhibiting adenylate cyclase activity. Arrestin family members inhibit signaling via G proteins and mediate activation of alternative signaling pathways. Regulates the release of 5-hydroxytryptamine, dopamine and acetylcholine in the brain, and thereby affects neural activity, nociceptive processing, pain perception, mood and behavior. Besides, plays a role in vasoconstriction of cerebral arteries. This Gorilla gorilla gorilla (Western lowland gorilla) protein is 5-hydroxytryptamine receptor 1B (HTR1B).